The chain runs to 115 residues: Chorion protein S15 (115 aa).

The N-terminal stretch at 1–18 (MKYLIVCVTLALFAYINA) is a signal peptide.

It belongs to the chorion protein S15/S18 family.

It localises to the secreted. In terms of biological role, chorion membrane (egg shell) protein; plays a role in protecting the egg from the environment. The sequence is that of Chorion protein S15 (Cp15) from Drosophila melanogaster (Fruit fly).